The sequence spans 435 residues: Hydrogenobyrinate a,c-diamide synthase (435 aa).

The GATase cobBQ-type domain occupies 247–435; it reads RIALARDAAF…TGSFFHLIAG (189 aa). Cys-329 (nucleophile) is an active-site residue.

Belongs to the CobB/CbiA family. It depends on Mg(2+) as a cofactor.

The enzyme catalyses hydrogenobyrinate + 2 L-glutamine + 2 ATP + 2 H2O = hydrogenobyrinate a,c-diamide + 2 L-glutamate + 2 ADP + 2 phosphate + 2 H(+). Its pathway is cofactor biosynthesis; adenosylcobalamin biosynthesis; cob(II)yrinate a,c-diamide from precorrin-2 (aerobic route): step 9/10. Its function is as follows. Catalyzes the ATP-dependent amidation of the two carboxylate groups at positions a and c of hydrogenobyrinate, using either L-glutamine or ammonia as the nitrogen source. The protein is Hydrogenobyrinate a,c-diamide synthase of Rhodobacter capsulatus (strain ATCC BAA-309 / NBRC 16581 / SB1003).